The following is a 164-amino-acid chain: Putative 4-hydroxy-4-methyl-2-oxoglutarate aldolase (164 aa).

Substrate is bound by residues 75–78 (GDLI) and R97. D98 provides a ligand contact to a divalent metal cation.

This sequence belongs to the class II aldolase/RraA-like family. In terms of assembly, homotrimer. Requires a divalent metal cation as cofactor.

It carries out the reaction 4-hydroxy-4-methyl-2-oxoglutarate = 2 pyruvate. It catalyses the reaction oxaloacetate + H(+) = pyruvate + CO2. In terms of biological role, catalyzes the aldol cleavage of 4-hydroxy-4-methyl-2-oxoglutarate (HMG) into 2 molecules of pyruvate. Also contains a secondary oxaloacetate (OAA) decarboxylase activity due to the common pyruvate enolate transition state formed following C-C bond cleavage in the retro-aldol and decarboxylation reactions. The sequence is that of Putative 4-hydroxy-4-methyl-2-oxoglutarate aldolase from Shewanella oneidensis (strain ATCC 700550 / JCM 31522 / CIP 106686 / LMG 19005 / NCIMB 14063 / MR-1).